Reading from the N-terminus, the 321-residue chain is L-Ala-D/L-Glu epimerase (321 aa).

Substrate contacts are provided by T124 and K149. K151 serves as the catalytic Proton acceptor; specific for (R)-substrate epimerization. Residues D176, E202, and D225 each coordinate Mg(2+). Catalysis depends on K247, which acts as the Proton acceptor; specific for (S)-substrate epimerization. Residues C275, D297, and D299 each contribute to the substrate site.

It belongs to the mandelate racemase/muconate lactonizing enzyme family. Monomer. Requires Mg(2+) as cofactor.

The enzyme catalyses L-alanyl-L-glutamate = L-alanyl-D-glutamate. It participates in cell wall biogenesis; peptidoglycan recycling. Catalyzes the epimerization of L-Ala-D-Glu to L-Ala-L-Glu and has a role in the recycling of the murein peptide, of which L-Ala-D-Glu is a component. Is also able to catalyze the reverse reaction and the epimerization of all the L-Ala-X dipeptides, except L-Ala-L-Arg, L-Ala-L-Lys and L-Ala-L-Pro. Is also active with L-Gly-L-Glu, L-Phe-L-Glu, and L-Ser-L-Glu, but not with L-Glu-L-Glu, L-Lys-L-Glu, L-Pro-L-Glu, L-Lys-L-Ala, or D-Ala-D-Ala. This chain is L-Ala-D/L-Glu epimerase (ycjG), found in Escherichia coli (strain K12).